The following is a 503-amino-acid chain: Secreted RxLR effector protein RXLR-C08 (503 aa).

Residues 1–22 form the signal peptide; the sequence is MRLCGVASAFLSTLILIAHIDA. N-linked (GlcNAc...) asparagine glycosylation is found at Asn27, Asn35, and Asn45. The dEER signature appears at 57–60; sequence DEER. Residues Asn108, Asn197, and Asn374 are each glycosylated (N-linked (GlcNAc...) asparagine).

It belongs to the RxLR effector family.

It is found in the secreted. The protein localises to the host Golgi apparatus. Functionally, secreted effector that suppresses pattern-triggered immunity (PTI) in plant host. The polypeptide is Secreted RxLR effector protein RXLR-C08 (Plasmopara halstedii (Downy mildew of sunflower)).